Reading from the N-terminus, the 530-residue chain is Putative ABC transporter ATP-binding protein SSO2030 (530 aa).

2 ABC transporter domains span residues 6–243 (IRDL…LGLE) and 282–516 (ALYA…EPPL). ATP is bound by residues 38–45 (GRSGSGKS) and 314–321 (GKNGSGKT).

This sequence belongs to the ABC transporter superfamily.

It is found in the cell membrane. Probably part of an ABC transporter complex. Responsible for energy coupling to the transport system. This Saccharolobus solfataricus (strain ATCC 35092 / DSM 1617 / JCM 11322 / P2) (Sulfolobus solfataricus) protein is Putative ABC transporter ATP-binding protein SSO2030.